A 274-amino-acid chain; its full sequence is Large ribosomal subunit protein uL2 (274 aa).

A disordered region spans residues 223–274 (VAMNPVDHPHGGGEGRTGEGRHAVDPWGNLTKGYRTRNNKRTQSMIVSRRKK). Residues 229–246 (DHPHGGGEGRTGEGRHAV) are compositionally biased toward basic and acidic residues.

The protein belongs to the universal ribosomal protein uL2 family. In terms of assembly, part of the 50S ribosomal subunit. Forms a bridge to the 30S subunit in the 70S ribosome.

In terms of biological role, one of the primary rRNA binding proteins. Required for association of the 30S and 50S subunits to form the 70S ribosome, for tRNA binding and peptide bond formation. It has been suggested to have peptidyltransferase activity; this is somewhat controversial. Makes several contacts with the 16S rRNA in the 70S ribosome. The protein is Large ribosomal subunit protein uL2 of Verminephrobacter eiseniae (strain EF01-2).